The following is an 843-amino-acid chain: Protein P (843 aa).

The tract at residues methionine 1 to glutamine 177 is terminal protein domain (TP). Residues glutamate 178 to histidine 346 are spacer. Disordered stretches follow at residues leucine 218–isoleucine 243 and threonine 291–glutamine 315. Residues glutamate 347–glutamine 690 form a polymerase/reverse transcriptase domain (RT) region. Residues glutamate 357–isoleucine 600 enclose the Reverse transcriptase domain. Residues aspartate 429, aspartate 551, and aspartate 552 each contribute to the Mg(2+) site.

This sequence belongs to the hepadnaviridae P protein family.

It carries out the reaction DNA(n) + a 2'-deoxyribonucleoside 5'-triphosphate = DNA(n+1) + diphosphate. It catalyses the reaction Endonucleolytic cleavage to 5'-phosphomonoester.. Activated by host HSP70 and HSP40 in vitro to be able to bind the epsilon loop of the pgRNA. Because deletion of the RNase H region renders the protein partly chaperone-independent, the chaperones may be needed indirectly to relieve occlusion of the RNA-binding site by this domain. Inhibited by several reverse-transcriptase inhibitors: Lamivudine, Adefovir and Entecavir. Functionally, multifunctional enzyme that converts the viral RNA genome into dsDNA in viral cytoplasmic capsids. This enzyme displays a DNA polymerase activity that can copy either DNA or RNA templates, and a ribonuclease H (RNase H) activity that cleaves the RNA strand of RNA-DNA heteroduplexes in a partially processive 3'- to 5'-endonucleasic mode. Neo-synthesized pregenomic RNA (pgRNA) are encapsidated together with the P protein, and reverse-transcribed inside the nucleocapsid. Initiation of reverse-transcription occurs first by binding the epsilon loop on the pgRNA genome, and is initiated by protein priming, thereby the 5'-end of (-)DNA is covalently linked to P protein. Partial (+)DNA is synthesized from the (-)DNA template and generates the relaxed circular DNA (RC-DNA) genome. After budding and infection, the RC-DNA migrates in the nucleus, and is converted into a plasmid-like covalently closed circular DNA (cccDNA). The activity of P protein does not seem to be necessary for cccDNA generation, and is presumably released from (+)DNA by host nuclear DNA repair machinery. The chain is Protein P from Hepatitis B virus genotype C subtype ayw (isolate Australia/AustRC/1992) (HBV-C).